Here is a 320-residue protein sequence, read N- to C-terminus: Ferrochelatase (320 aa).

Fe cation contacts are provided by His-194 and Glu-275.

It belongs to the ferrochelatase family. As to quaternary structure, monomer.

The protein localises to the cytoplasm. It catalyses the reaction heme b + 2 H(+) = protoporphyrin IX + Fe(2+). It participates in porphyrin-containing compound metabolism; protoheme biosynthesis; protoheme from protoporphyrin-IX: step 1/1. Its function is as follows. Catalyzes the ferrous insertion into protoporphyrin IX. The protein is Ferrochelatase of Salmonella typhi.